Reading from the N-terminus, the 200-residue chain is Large ribosomal subunit protein bL25 (200 aa).

It belongs to the bacterial ribosomal protein bL25 family. CTC subfamily. Part of the 50S ribosomal subunit; part of the 5S rRNA/L5/L18/L25 subcomplex. Contacts the 5S rRNA. Binds to the 5S rRNA independently of L5 and L18.

In terms of biological role, this is one of the proteins that binds to the 5S RNA in the ribosome where it forms part of the central protuberance. This chain is Large ribosomal subunit protein bL25, found in Pseudomonas fluorescens (strain Pf0-1).